A 132-amino-acid polypeptide reads, in one-letter code: Small ribosomal subunit protein uS8 (132 aa).

It belongs to the universal ribosomal protein uS8 family. As to quaternary structure, part of the 30S ribosomal subunit. Contacts proteins S5 and S12.

Functionally, one of the primary rRNA binding proteins, it binds directly to 16S rRNA central domain where it helps coordinate assembly of the platform of the 30S subunit. The chain is Small ribosomal subunit protein uS8 from Caulobacter sp. (strain K31).